An 88-amino-acid chain; its full sequence is UPF0367 protein Tery_1229 (88 aa).

This sequence belongs to the UPF0367 family.

This Trichodesmium erythraeum (strain IMS101) protein is UPF0367 protein Tery_1229.